A 347-amino-acid polypeptide reads, in one-letter code: Phosphoribosylformylglycinamidine cyclo-ligase (347 aa).

Belongs to the AIR synthase family.

It is found in the cytoplasm. It carries out the reaction 2-formamido-N(1)-(5-O-phospho-beta-D-ribosyl)acetamidine + ATP = 5-amino-1-(5-phospho-beta-D-ribosyl)imidazole + ADP + phosphate + H(+). The protein operates within purine metabolism; IMP biosynthesis via de novo pathway; 5-amino-1-(5-phospho-D-ribosyl)imidazole from N(2)-formyl-N(1)-(5-phospho-D-ribosyl)glycinamide: step 2/2. The chain is Phosphoribosylformylglycinamidine cyclo-ligase from Prochlorococcus marinus (strain AS9601).